A 379-amino-acid polypeptide reads, in one-letter code: MNALHFGAGNIGRGFIGKLLADSGVFVTFADINQTQIDQINQNKQYGVKIVGDASRVEVVKNIAAINSKDEEAVIEQVKSVELITTAVGPNVLGFIAPLFAKALAARLEAGNTQPLNIIACENMVRGTSFFKAKIFENLTDSQQAEIEKFVGFVDSAVDRIVPPAELNEADPLEVTVEEFSEWIVDKTQFKGQIPDIKGMELTDNLMAFVERKLFTLNTGHLISAYLGKQAGVKWIKEAIAIDSVKAAVKATMEESGAVLIKRYNFDPQAHAAYIEKILKRFANPYLNDDVNRVGREPIRKLSPNDRLIKPLLGTLEYGLPHKNLVNGVVMALQYRNEEDPQAVELAQFIADNGVAAAVEKYTGLTNQEVIDQVVALYN.

3–14 contributes to the NAD(+) binding site; the sequence is ALHFGAGNIGRG.

Belongs to the mannitol dehydrogenase family.

The catalysed reaction is D-mannitol 1-phosphate + NAD(+) = beta-D-fructose 6-phosphate + NADH + H(+). This Actinobacillus pleuropneumoniae serotype 5b (strain L20) protein is Mannitol-1-phosphate 5-dehydrogenase.